The primary structure comprises 291 residues: Lysosomal amino acid transporter 1 homolog (291 aa).

Topologically, residues 1 to 37 are lumenal; the sequence is MVWKKLGSRNFSSCPSGSIQWIWDVLGECAQDGWDEA. Asn10 is a glycosylation site (N-linked (GlcNAc...) asparagine). Positions 34-100 constitute a PQ-loop 1 domain; that stretch reads WDEASVGLGL…LADQLPLQTY (67 aa). A helical membrane pass occupies residues 38-58; that stretch reads SVGLGLISILCFAASTFPQFI. Residues 59–71 lie on the Cytoplasmic side of the membrane; that stretch reads KAYKTGNMDQALS. The chain crosses the membrane as a helical span at residues 72-92; it reads LWFLLGWIGGDSCNLIGSFLA. The Lumenal portion of the chain corresponds to 93–98; it reads DQLPLQ. The helical transmembrane segment at 99–119 threads the bilayer; that stretch reads TYTAVYYVLADLVMLTLYFYY. Residues 120-134 are Cytoplasmic-facing; that stretch reads KFRTRPSLLSAPINS. A helical membrane pass occupies residues 135–155; that stretch reads VLLFLMGMACATPLLSAAGPV. The Lumenal portion of the chain corresponds to 156 to 182; it reads AAPREAFRGRALLSVESGSKPFTRQEV. A helical transmembrane segment spans residues 183–203; the sequence is IGFVIGSISSVLYLLSRLPQI. The 60-residue stretch at 184–243 folds into the PQ-loop 2 domain; the sequence is GFVIGSISSVLYLLSRLPQIRTNFLRKSTQGISYSLFALVMLGNTLYGLSVLLKNPEEGQ. Residues 204–214 are Cytoplasmic-facing; sequence RTNFLRKSTQG. A helical transmembrane segment spans residues 215–235; the sequence is ISYSLFALVMLGNTLYGLSVL. The Lumenal portion of the chain corresponds to 236–254; it reads LKNPEEGQSEGSYLLHHLP. Residues 255–275 traverse the membrane as a helical segment; sequence WLVGSLGVLLLDTIISIQFLV. The Cytoplasmic portion of the chain corresponds to 276 to 291; it reads YRRSTAASELEPLLPS. The Di-leucine motif motif lies at 288–289; that stretch reads LL.

It belongs to the laat-1 family.

Its subcellular location is the lysosome membrane. Functionally, amino acid transporter that specifically mediates the pH-dependent export of the cationic amino acids arginine, histidine and lysine from lysosomes. This is Lysosomal amino acid transporter 1 homolog from Homo sapiens (Human).